The sequence spans 529 residues: Glucocorticoid modulatory element-binding protein 2 (529 aa).

The region spanning 80 to 162 (EEGENLEAEI…RKIMDSGELD (83 aa)) is the SAND domain. Cysteine 109 provides a ligand contact to Zn(2+). Residues lysine 135, lysine 139, lysine 142, and arginine 153 each coordinate DNA. Residue lysine 154 forms a Glycyl lysine isopeptide (Lys-Gly) (interchain with G-Cter in SUMO1); alternate linkage. A Glycyl lysine isopeptide (Lys-Gly) (interchain with G-Cter in SUMO2); alternate cross-link involves residue lysine 154. Zn(2+)-binding residues include histidine 166, cysteine 170, and cysteine 174. Positions 244–347 (LLDEVIQEFQ…HLSNVLMTLT (104 aa)) form a coiled coil. A Phosphoserine modification is found at serine 372.

As to quaternary structure, homodimer, and heterodimer of GMEB1 and GMEB2. Interacts with the glucocorticoid receptor (NR3C1). May interact with CREB-binding protein (CBP).

The protein resides in the nucleus. It is found in the cytoplasm. In terms of biological role, trans-acting factor that binds to glucocorticoid modulatory elements (GME) present in the TAT (tyrosine aminotransferase) promoter and increases sensitivity to low concentrations of glucocorticoids. Also binds to the transferrin receptor promoter. This chain is Glucocorticoid modulatory element-binding protein 2 (Gmeb2), found in Rattus norvegicus (Rat).